We begin with the raw amino-acid sequence, 330 residues long: tRNA (guanine(37)-N(1))-methyltransferase Trm5b (330 aa).

S-adenosyl-L-methionine is bound by residues Arg-173, 211-212 (DI), 238-239 (DS), and Asn-252.

The protein belongs to the class I-like SAM-binding methyltransferase superfamily. TRM5/TYW2 family.

The protein localises to the cytoplasm. The catalysed reaction is guanosine(37) in tRNA + S-adenosyl-L-methionine = N(1)-methylguanosine(37) in tRNA + S-adenosyl-L-homocysteine + H(+). Specifically methylates the N1 position of guanosine-37 in various tRNAs. The sequence is that of tRNA (guanine(37)-N(1))-methyltransferase Trm5b from Pyrococcus abyssi (strain GE5 / Orsay).